Here is a 154-residue protein sequence, read N- to C-terminus: Aspartate carbamoyltransferase regulatory chain (154 aa).

4 residues coordinate Zn(2+): cysteine 109, cysteine 114, cysteine 138, and cysteine 141.

Belongs to the PyrI family. In terms of assembly, contains catalytic and regulatory chains. It depends on Zn(2+) as a cofactor.

Its function is as follows. Involved in allosteric regulation of aspartate carbamoyltransferase. The protein is Aspartate carbamoyltransferase regulatory chain of Yersinia enterocolitica serotype O:8 / biotype 1B (strain NCTC 13174 / 8081).